Reading from the N-terminus, the 550-residue chain is Membrane protein of ER body 2 (550 aa).

The tract at residues 46–199 is disordered; it reads EFRSKAAATA…SSDSEEKSNL (154 aa). Composition is skewed to low complexity over residues 80–105 and 112–121; these read SVSE…SETG and TGSNEENGNN. Positions 122-132 are enriched in polar residues; the sequence is WLESSSTNLPN. The stretch at 134-165 forms a coiled coil; the sequence is ENKRQRNGEDCEIEEEEENNERSLSDSEEKSN. A compositionally biased stretch (acidic residues) spans 143 to 152; the sequence is DCEIEEEEEN. Basic and acidic residues-rich tracts occupy residues 153–166 and 185–198; these read NERS…KSNL and KNER…EKSN. Helical transmembrane passes span 374-394, 425-445, 458-478, and 500-520; these read STMN…IVLA, ILVA…VYAF, ISVF…KVYV, and SIVV…GEYI. Residues 393–418 are a coiled coil; that stretch reads LAQNFQDLRNSSDQEKDRYEELLGRR.

The protein belongs to the CCC1 family. As to quaternary structure, interacts directly or indirectly with NAI2.

It localises to the endoplasmic reticulum membrane. Its function is as follows. May sequester excess cytosolic iron and manganese into endoplasmic reticulum to reduce metal ion toxicity. Not essential for the accumulation of ER body components, including PYK10. In Arabidopsis thaliana (Mouse-ear cress), this protein is Membrane protein of ER body 2 (MEB2).